The chain runs to 276 residues: Undecaprenyl-diphosphatase 2 (276 aa).

8 helical membrane passes run 1–21 (MSLWFLVFLSVLQGVTELFPV), 44–64 (QLLPFLVALHLGTALALLWYF), 87–107 (GHLMWALIIGTIPTGIVGLLL), 114–134 (VFHDLRIVAVALIINGVLLWV), 150–170 (MTFKQAFFVGLAQIGALIPGF), 190–210 (AAEFSFLLGTPIIFAAGVLEL), 220–240 (LMDALLGGVLTAIAAYLSVRF), and 251–271 (LASFGVYCVIAGVFFLGWFML).

It belongs to the UppP family.

The protein localises to the cell inner membrane. It carries out the reaction di-trans,octa-cis-undecaprenyl diphosphate + H2O = di-trans,octa-cis-undecaprenyl phosphate + phosphate + H(+). In terms of biological role, catalyzes the dephosphorylation of undecaprenyl diphosphate (UPP). Confers resistance to bacitracin. The polypeptide is Undecaprenyl-diphosphatase 2 (Burkholderia ambifaria (strain ATCC BAA-244 / DSM 16087 / CCUG 44356 / LMG 19182 / AMMD) (Burkholderia cepacia (strain AMMD))).